A 254-amino-acid chain; its full sequence is Imidazole glycerol phosphate synthase subunit HisF (254 aa).

Catalysis depends on residues Asp-11 and Asp-130.

It belongs to the HisA/HisF family. In terms of assembly, heterodimer of HisH and HisF.

It is found in the cytoplasm. The catalysed reaction is 5-[(5-phospho-1-deoxy-D-ribulos-1-ylimino)methylamino]-1-(5-phospho-beta-D-ribosyl)imidazole-4-carboxamide + L-glutamine = D-erythro-1-(imidazol-4-yl)glycerol 3-phosphate + 5-amino-1-(5-phospho-beta-D-ribosyl)imidazole-4-carboxamide + L-glutamate + H(+). It participates in amino-acid biosynthesis; L-histidine biosynthesis; L-histidine from 5-phospho-alpha-D-ribose 1-diphosphate: step 5/9. Its function is as follows. IGPS catalyzes the conversion of PRFAR and glutamine to IGP, AICAR and glutamate. The HisF subunit catalyzes the cyclization activity that produces IGP and AICAR from PRFAR using the ammonia provided by the HisH subunit. This chain is Imidazole glycerol phosphate synthase subunit HisF, found in Staphylococcus carnosus (strain TM300).